We begin with the raw amino-acid sequence, 381 residues long: Succinyl-diaminopimelate desuccinylase (381 aa).

A Zn(2+)-binding site is contributed by H71. D73 is a catalytic residue. D104 is a binding site for Zn(2+). Residue E138 is the Proton acceptor of the active site. 3 residues coordinate Zn(2+): E139, E167, and H353.

It belongs to the peptidase M20A family. DapE subfamily. In terms of assembly, homodimer. Zn(2+) serves as cofactor. Requires Co(2+) as cofactor.

The catalysed reaction is N-succinyl-(2S,6S)-2,6-diaminopimelate + H2O = (2S,6S)-2,6-diaminopimelate + succinate. The protein operates within amino-acid biosynthesis; L-lysine biosynthesis via DAP pathway; LL-2,6-diaminopimelate from (S)-tetrahydrodipicolinate (succinylase route): step 3/3. Functionally, catalyzes the hydrolysis of N-succinyl-L,L-diaminopimelic acid (SDAP), forming succinate and LL-2,6-diaminopimelate (DAP), an intermediate involved in the bacterial biosynthesis of lysine and meso-diaminopimelic acid, an essential component of bacterial cell walls. The protein is Succinyl-diaminopimelate desuccinylase of Shewanella pealeana (strain ATCC 700345 / ANG-SQ1).